The primary structure comprises 338 residues: Methionine import ATP-binding protein MetN 2 (338 aa).

One can recognise an ABC transporter domain in the interval 2–242 (IEIEKVCVDF…PQHAFTQQLV (241 aa)). 39 to 46 (GTSGAGKS) provides a ligand contact to ATP.

It belongs to the ABC transporter superfamily. Methionine importer (TC 3.A.1.24) family. The complex is composed of two ATP-binding proteins (MetN), two transmembrane proteins (MetI) and a solute-binding protein (MetQ).

The protein localises to the cell inner membrane. It carries out the reaction L-methionine(out) + ATP + H2O = L-methionine(in) + ADP + phosphate + H(+). The enzyme catalyses D-methionine(out) + ATP + H2O = D-methionine(in) + ADP + phosphate + H(+). Its function is as follows. Part of the ABC transporter complex MetNIQ involved in methionine import. Responsible for energy coupling to the transport system. This Salmonella paratyphi A (strain ATCC 9150 / SARB42) protein is Methionine import ATP-binding protein MetN 2.